Here is a 373-residue protein sequence, read N- to C-terminus: 3 beta-hydroxysteroid dehydrogenase/Delta 5--&gt;4-isomerase (373 aa).

Y155 acts as the Proton acceptor in catalysis. Position 159 (K159) interacts with NAD(+). The helical transmembrane segment at 288–308 (ISLQYWLAFLLEIVSFLLSPI) threads the bilayer.

It belongs to the 3-beta-HSD family.

Its subcellular location is the endoplasmic reticulum membrane. It is found in the mitochondrion membrane. It carries out the reaction a 3beta-hydroxy-Delta(5)-steroid + NAD(+) = a 3-oxo-Delta(5)-steroid + NADH + H(+). The enzyme catalyses a 3-oxo-Delta(5)-steroid = a 3-oxo-Delta(4)-steroid. Its pathway is lipid metabolism; steroid biosynthesis. In terms of biological role, 3-beta-HSD is a bifunctional enzyme, that catalyzes the oxidative conversion of Delta(5)-ene-3-beta-hydroxy steroid, and the oxidative conversion of ketosteroids. The 3-beta-HSD enzymatic system plays a crucial role in the biosynthesis of all classes of hormonal steroids. This is 3 beta-hydroxysteroid dehydrogenase/Delta 5--&gt;4-isomerase (HSD3B) from Bos taurus (Bovine).